Reading from the N-terminus, the 415-residue chain is Histidine--tRNA ligase (415 aa).

This sequence belongs to the class-II aminoacyl-tRNA synthetase family. Homodimer.

It is found in the cytoplasm. It carries out the reaction tRNA(His) + L-histidine + ATP = L-histidyl-tRNA(His) + AMP + diphosphate + H(+). This Idiomarina loihiensis (strain ATCC BAA-735 / DSM 15497 / L2-TR) protein is Histidine--tRNA ligase.